A 496-amino-acid polypeptide reads, in one-letter code: GTPase Der (496 aa).

2 consecutive EngA-type G domains span residues 3–168 (PIIA…VPEK) and 210–383 (IKLA…DCST). GTP-binding positions include 9–16 (GRPNVGKS), 56–60 (DTGGI), 120–123 (NKID), 216–223 (GRPNVGKS), 263–267 (DTAGV), and 328–331 (NKWD). The 85-residue stretch at 384–468 (KRINTSLLTR…PIRIQFKESE (85 aa)) folds into the KH-like domain.

The protein belongs to the TRAFAC class TrmE-Era-EngA-EngB-Septin-like GTPase superfamily. EngA (Der) GTPase family. In terms of assembly, associates with the 50S ribosomal subunit.

In terms of biological role, GTPase that plays an essential role in the late steps of ribosome biogenesis. The protein is GTPase Der of Hamiltonella defensa subsp. Acyrthosiphon pisum (strain 5AT).